A 457-amino-acid chain; its full sequence is Adenylosuccinate synthetase isozyme 1 (457 aa).

Residues 1–24 (MSGTRASNDRPPGTGGVKRGRLQQ) are disordered. GTP-binding positions include 42–48 (GDEGKGK) and 70–72 (GHT). Catalysis depends on Asp-43, which acts as the Proton acceptor. Mg(2+) is bound by residues Asp-43 and Gly-70. Residue Asp-43 coordinates substrate. Residues 43–46 (DEGK), 68–71 (NAGH), Thr-163, Arg-177, Asn-256, Thr-271, and Arg-335 each bind IMP. His-71 serves as the catalytic Proton donor. A substrate-binding site is contributed by 331–337 (VTTGRKR). GTP contacts are provided by residues Arg-337, 363–365 (KLD), and 445–448 (GVGK).

The protein belongs to the adenylosuccinate synthetase family. In terms of assembly, homodimer. Requires Mg(2+) as cofactor. As to expression, high levels in muscle.

It localises to the cytoplasm. It is found in the membrane. The catalysed reaction is IMP + L-aspartate + GTP = N(6)-(1,2-dicarboxyethyl)-AMP + GDP + phosphate + 2 H(+). It functions in the pathway purine metabolism; AMP biosynthesis via de novo pathway; AMP from IMP: step 1/2. Weakly inhibited by AMP non-competitively to all substrates. Inhibited by IMP non-competitively with respect to GTP. Inhibited by fructose 1,6-bisphosphate competitively with respect to IMP. Component of the purine nucleotide cycle (PNC), which interconverts IMP and AMP to regulate the nucleotide levels in various tissues, and which contributes to glycolysis and ammoniagenesis. Catalyzes the first committed step in the biosynthesis of AMP from IMP. The protein is Adenylosuccinate synthetase isozyme 1 (Adss1) of Mus musculus (Mouse).